Consider the following 397-residue polypeptide: Lipoyl synthase 2, chloroplastic (397 aa).

A chloroplast-targeting transit peptide spans 1–35; it reads MIEQSLSKPSFSLSIPIPKAPKSKSSFFCSYSKIR. A disordered region spans residues 49–85; that stretch reads AKHPQNSTTINNGSSSSASVDLKNNEKGPYPYPGGGK. A compositionally biased stretch (low complexity) spans 54–67; that stretch reads NSTTINNGSSSSAS. [4Fe-4S] cluster contacts are provided by Cys128, Cys133, Cys139, Cys159, Cys163, Cys166, and Ser374. One can recognise a Radical SAM core domain in the interval 142–363; sequence GGGDGIATAT…KEYGESIGFR (222 aa).

Belongs to the radical SAM superfamily. Lipoyl synthase family. Requires [4Fe-4S] cluster as cofactor.

It is found in the plastid. The protein localises to the chloroplast. It catalyses the reaction [[Fe-S] cluster scaffold protein carrying a second [4Fe-4S](2+) cluster] + N(6)-octanoyl-L-lysyl-[protein] + 2 oxidized [2Fe-2S]-[ferredoxin] + 2 S-adenosyl-L-methionine + 4 H(+) = [[Fe-S] cluster scaffold protein] + N(6)-[(R)-dihydrolipoyl]-L-lysyl-[protein] + 4 Fe(3+) + 2 hydrogen sulfide + 2 5'-deoxyadenosine + 2 L-methionine + 2 reduced [2Fe-2S]-[ferredoxin]. Its pathway is protein modification; protein lipoylation via endogenous pathway; protein N(6)-(lipoyl)lysine from octanoyl-[acyl-carrier-protein]: step 2/2. In terms of biological role, catalyzes the radical-mediated insertion of two sulfur atoms into the C-6 and C-8 positions of the octanoyl moiety bound to the lipoyl domains of lipoate-dependent enzymes, thereby converting the octanoylated domains into lipoylated derivatives. This is Lipoyl synthase 2, chloroplastic from Populus trichocarpa (Western balsam poplar).